The primary structure comprises 307 residues: Serine/threonine-protein phosphatase 4 catalytic subunit (307 aa).

Ala-2 bears the N-acetylalanine mark. Positions 54, 56, 82, and 114 each coordinate Mn(2+). Residue His-115 is the Proton donor of the active site. Mn(2+) contacts are provided by His-164 and His-238. Leucine methyl ester is present on Leu-307.

This sequence belongs to the PPP phosphatase family. PP-4 (PP-X) subfamily. As to quaternary structure, serine/threonine-protein phosphatase 4 (PP4) occurs in different assemblies of the catalytic and one or more regulatory subunits. Component of the PP4 complexes PPP4C-PPP4R1, PPP4C-PPP4R2, PPP4C-PPP4R2-PPP4R3A, PPP4C-PPP4R2-PPP4R3B and PPP4C-PPP4R4. The PPP4C-PPP4R2 complex appears to be a tetramer composed of 2 molecules of PPP4C and 2 molecules of PPP4R2. Interacts with REL, NFKB1/p50 and RELA. Interacts with SMN1 and GEMIN4. Interacts with IRS4 (phosphorylated). Interacts with SMEK1/PPP4R3A; the interaction requires PP4R2. Interacts with HDAC3. Mn(2+) serves as cofactor. Post-translationally, methylation at the C-terminal Leu-307 is critical for interactions with regulatory subunits and functions in DNA repair.

The protein localises to the cytoplasm. Its subcellular location is the nucleus. It is found in the cytoskeleton. The protein resides in the microtubule organizing center. It localises to the centrosome. The catalysed reaction is O-phospho-L-seryl-[protein] + H2O = L-seryl-[protein] + phosphate. It catalyses the reaction O-phospho-L-threonyl-[protein] + H2O = L-threonyl-[protein] + phosphate. Its function is as follows. Protein phosphatase that is involved in many processes such as microtubule organization at centrosomes, maturation of spliceosomal snRNPs, apoptosis, DNA repair, tumor necrosis factor (TNF)-alpha signaling, activation of c-Jun N-terminal kinase MAPK8, regulation of histone acetylation, DNA damage checkpoint signaling, NF-kappa-B activation and cell migration. The PPP4C-PPP4R1 PP4 complex may play a role in dephosphorylation and regulation of HDAC3. The PPP4C-PPP4R2-PPP4R3A PP4 complex specifically dephosphorylates H2AX phosphorylated on Ser-140 (gamma-H2AX) generated during DNA replication and required for DNA DSB repair. Dephosphorylates NDEL1 at CDK1 phosphorylation sites and negatively regulates CDK1 activity in interphase. In response to DNA damage, catalyzes RPA2 dephosphorylation, an essential step for DNA repair since it allows the efficient RPA2-mediated recruitment of RAD51 to chromatin. The polypeptide is Serine/threonine-protein phosphatase 4 catalytic subunit (PPP4C) (Oryctolagus cuniculus (Rabbit)).